The following is a 602-amino-acid chain: Elongation factor 4 (602 aa).

Residues 7 to 188 (ENIRNFSIIA…AIVELIPPPK (182 aa)) form the tr-type G domain. GTP-binding positions include 19-24 (DHGKST) and 135-138 (NKID).

It belongs to the TRAFAC class translation factor GTPase superfamily. Classic translation factor GTPase family. LepA subfamily.

Its subcellular location is the cell inner membrane. It carries out the reaction GTP + H2O = GDP + phosphate + H(+). Functionally, required for accurate and efficient protein synthesis under certain stress conditions. May act as a fidelity factor of the translation reaction, by catalyzing a one-codon backward translocation of tRNAs on improperly translocated ribosomes. Back-translocation proceeds from a post-translocation (POST) complex to a pre-translocation (PRE) complex, thus giving elongation factor G a second chance to translocate the tRNAs correctly. Binds to ribosomes in a GTP-dependent manner. The polypeptide is Elongation factor 4 (Chlamydia abortus (strain DSM 27085 / S26/3) (Chlamydophila abortus)).